An 84-amino-acid polypeptide reads, in one-letter code: RNA-binding protein Hfq (84 aa).

The 61-residue stretch at 11 to 71 folds into the Sm domain; it reads DTFLNHVRKN…ISTIMPGHPV (61 aa).

The protein belongs to the Hfq family. In terms of assembly, homohexamer.

In terms of biological role, RNA chaperone that binds small regulatory RNA (sRNAs) and mRNAs to facilitate mRNA translational regulation in response to envelope stress, environmental stress and changes in metabolite concentrations. Also binds with high specificity to tRNAs. The chain is RNA-binding protein Hfq from Methylorubrum populi (strain ATCC BAA-705 / NCIMB 13946 / BJ001) (Methylobacterium populi).